Consider the following 361-residue polypeptide: Terpene synthase 6 (361 aa).

Positions 81 to 86 (DDVLDA) match the DDxx(x)D/E motif motif. An NDxxSxxxD/E motif motif is present at residues 223–231 (NDLVSYEKE).

The protein belongs to the terpene synthase family.

It catalyses the reaction (2E,6E)-farnesyl diphosphate = (2S,3R,6S,9S)-(-)-protoillud-7-ene + diphosphate. Terpene synthase that converts its substrate farnesyl diphosphate (FPP) into the sesquiterpene (2S,3R,6S,9S)-(-)-protoillud-7-ene. This Dictyostelium discoideum (Social amoeba) protein is Terpene synthase 6.